A 300-amino-acid chain; its full sequence is Ribosome-inactivating protein 3 (300 aa).

Glu207 is an active-site residue.

Belongs to the ribosome-inactivating protein family. Type 1 RIP subfamily. In terms of assembly, monomer. As to expression, accumulates to high levels in seeds.

The protein localises to the cytoplasm. It carries out the reaction Endohydrolysis of the N-glycosidic bond at one specific adenosine on the 28S rRNA.. Functionally, possesses features of some constitutive defense agent. The coordinate Opaque-2-controlled synthesis of this protein and the major seed storage proteins (zeins) may provide the germinating seedling with both nutritional benefits and protection against pathogen invasion of the surrounding endosperm. This is Ribosome-inactivating protein 3 (CRIP3) from Zea mays (Maize).